A 496-amino-acid chain; its full sequence is UDP-N-acetylmuramoylalanine--D-glutamate ligase (496 aa).

130 to 136 contacts ATP; that stretch reads GTNGKTT.

Belongs to the MurCDEF family.

It localises to the cytoplasm. The enzyme catalyses UDP-N-acetyl-alpha-D-muramoyl-L-alanine + D-glutamate + ATP = UDP-N-acetyl-alpha-D-muramoyl-L-alanyl-D-glutamate + ADP + phosphate + H(+). It functions in the pathway cell wall biogenesis; peptidoglycan biosynthesis. Its function is as follows. Cell wall formation. Catalyzes the addition of glutamate to the nucleotide precursor UDP-N-acetylmuramoyl-L-alanine (UMA). In Mycobacterium bovis (strain ATCC BAA-935 / AF2122/97), this protein is UDP-N-acetylmuramoylalanine--D-glutamate ligase.